A 582-amino-acid chain; its full sequence is SHC-transforming protein 2 (582 aa).

Disordered stretches follow at residues 1–24 (MTQG…APTT) and 47–70 (GPAA…AGPG). Residues 8–20 (RAPPAPPAPPEPE) show a composition bias toward pro residues. Residues 147 to 329 (LGPGVSYVVR…AGPEESAWGD (183 aa)) form the PID domain. The segment at 330–486 (EEDSLEHNYY…PTEEQLRQEP (157 aa)) is CH1. Tyr-338, Tyr-339, and Tyr-414 each carry phosphotyrosine. The disordered stretch occupies residues 460-481 (PLEDQWPSPPTRRAPVAPTEEQ). In terms of domain architecture, SH2 spans 487 to 578 (WYHGRMSRRA…ESELHLRGVV (92 aa)).

As to quaternary structure, interacts with the Trk receptors in a phosphotyrosine-dependent manner and MEGF12. Once activated, binds to GRB2. In terms of processing, phosphorylated on tyrosines by the Trk receptors. As to expression, expressed in brain. Expressed at high level in the hypothalamus and at low level in the caudate nucleus.

In terms of biological role, signaling adapter that couples activated growth factor receptors to signaling pathway in neurons. Involved in the signal transduction pathways of neurotrophin-activated Trk receptors in cortical neurons. In Homo sapiens (Human), this protein is SHC-transforming protein 2 (SHC2).